The sequence spans 120 residues: Immunoglobulin lambda variable 4-60 (120 aa).

An N-terminal signal peptide occupies residues 1 to 21; that stretch reads MAWTPLLLLFPLLLHCTGSLS. Positions 22–46 are framework-1; that stretch reads QPVLTQSSSASASLGSSVKLTCTLS. Residues 23–120 enclose the Ig-like domain; it reads PVLTQSSSAS…YYCETWDSNT (98 aa). A disulfide bond links C43 and C113. Residues 47-53 are complementarity-determining-1; sequence SGHSSYI. The segment at 54–70 is framework-2; it reads IAWHQQQPGKAPRYLMK. The complementarity-determining-2 stretch occupies residues 71 to 77; it reads LEGSGSY. The segment at 78–113 is framework-3; it reads NKGSGVPDRFSGSSSGADRYLTISNLQFEDEADYYC. The tract at residues 114–120 is complementarity-determining-3; the sequence is ETWDSNT.

In terms of assembly, immunoglobulins are composed of two identical heavy chains and two identical light chains; disulfide-linked.

Its subcellular location is the secreted. The protein resides in the cell membrane. Its function is as follows. V region of the variable domain of immunoglobulin light chains that participates in the antigen recognition. Immunoglobulins, also known as antibodies, are membrane-bound or secreted glycoproteins produced by B lymphocytes. In the recognition phase of humoral immunity, the membrane-bound immunoglobulins serve as receptors which, upon binding of a specific antigen, trigger the clonal expansion and differentiation of B lymphocytes into immunoglobulins-secreting plasma cells. Secreted immunoglobulins mediate the effector phase of humoral immunity, which results in the elimination of bound antigens. The antigen binding site is formed by the variable domain of one heavy chain, together with that of its associated light chain. Thus, each immunoglobulin has two antigen binding sites with remarkable affinity for a particular antigen. The variable domains are assembled by a process called V-(D)-J rearrangement and can then be subjected to somatic hypermutations which, after exposure to antigen and selection, allow affinity maturation for a particular antigen. The chain is Immunoglobulin lambda variable 4-60 from Homo sapiens (Human).